The primary structure comprises 339 residues: MISFNNVSKVYESGGQSVHAVEDVTLSVEKGEIFGIIGFSGAGKSTLLRLVNMLERPTAGTISIDDKDITSLSTKELRKLRQRIGMIFQSFNLFNSRTVFGNIAYPLKLAKVPKNEIKERVNELLKFVGLEDKANNYPEQLSGGQKQRVGIARALATSPDILICDEATSALDPETTTEILNLLKKVNREYNLTILLITHEMHVVKEICHRVAVMEKGKVIEEGKLFDVFTQPKTKTTQNFVRSVINDHLPESVLAKIQNGGQIYRLTFTGEETGQPVLSYIAKNYNVDVNVLYGNIIELQNVLFGNLLVELQGEQREIQKALQHLRLQVQLKEVEAHAS.

One can recognise an ABC transporter domain in the interval 2–241 (ISFNNVSKVY…PKTKTTQNFV (240 aa)). 38-45 (GFSGAGKS) provides a ligand contact to ATP.

This sequence belongs to the ABC transporter superfamily. Methionine importer (TC 3.A.1.24) family. In terms of assembly, the complex is composed of two ATP-binding proteins (MetN), two transmembrane proteins (MetI) and a solute-binding protein (MetQ).

Its subcellular location is the cell membrane. The enzyme catalyses L-methionine(out) + ATP + H2O = L-methionine(in) + ADP + phosphate + H(+). The catalysed reaction is D-methionine(out) + ATP + H2O = D-methionine(in) + ADP + phosphate + H(+). Its function is as follows. Part of the ABC transporter complex MetNIQ involved in methionine import. Responsible for energy coupling to the transport system. This chain is Methionine import ATP-binding protein MetN 1, found in Bacillus thuringiensis subsp. konkukian (strain 97-27).